The primary structure comprises 242 residues: Serine hydrolase cnsH (242 aa).

Active-site charge relay system residues include Ser56, Asp138, and His216.

Belongs to the AB hydrolase 3 family.

Its pathway is alkaloid biosynthesis. Serine hydrolase; part of the gene cluster that mediates the biosynthesis of communesins, a prominent class of indole alkaloids with great potential as pharmaceuticals. Communesins are biosynthesized by the coupling of tryptamine and aurantioclavine, two building blocks derived from L-tryptophan. The L-tryptophan decarboxylase cnsB converts L-tryptophan to tryptamine, whereas the tryptophan dimethylallyltransferase cnsF converts L-tryptophan to 4-dimethylallyl tryptophan which is further transformed to aurantioclavine by the aurantioclavine synthase cnsA, probably aided by the catalase cnsD. The cytochrome P450 monooxygenase cnsC catalyzes the heterodimeric coupling between the two different indole moieties, tryptamine and aurantioclavine, to construct vicinal quaternary stereocenters and yield the heptacyclic communesin scaffold. The O-methyltransferase cnsE then methylates the communesin scaffold to produce communesin K, the simplest characterized communesin that contains the heptacyclic core. The dioxygenase cnsJ converts communesin K into communesin I. Acylation to introduce the hexadienyl group at position N16 of communesin I by the acyltransferase cnsK leads to the production of communesin B. The hexadienyl group is produced by the highly reducing polyketide synthase cnsI, before being hydrolytically removed from cnsI by the serine hydrolase cnsH, converted into hexadienyl-CoA by the CoA ligase cnsG, and then transferred to communesin I by cnsK. Surprisingly, cnsK may also be a promiscuous acyltransferase that can tolerate a range of acyl groups, including acetyl-, propionyl-, and butyryl-CoA, which lead to communesins A, G and H respectively. The roles of the alpha-ketoglutarate-dependent dioxygenases cnsM and cnsP have still to be determined. The chain is Serine hydrolase cnsH from Penicillium expansum (Blue mold rot fungus).